The chain runs to 91 residues: Large ribosomal subunit protein uL23 (91 aa).

It belongs to the universal ribosomal protein uL23 family. In terms of assembly, part of the 50S ribosomal subunit. Contacts protein L29, and trigger factor when it is bound to the ribosome.

Its function is as follows. One of the early assembly proteins it binds 23S rRNA. One of the proteins that surrounds the polypeptide exit tunnel on the outside of the ribosome. Forms the main docking site for trigger factor binding to the ribosome. The polypeptide is Large ribosomal subunit protein uL23 (Staphylococcus saprophyticus subsp. saprophyticus (strain ATCC 15305 / DSM 20229 / NCIMB 8711 / NCTC 7292 / S-41)).